Here is a 600-residue protein sequence, read N- to C-terminus: Elongation factor 4 (600 aa).

The tr-type G domain occupies 4–186; that stretch reads SKIRNFSIIA…EIVKKIPAPQ (183 aa). GTP-binding positions include 16 to 21 and 133 to 136; these read DHGKST and NKID.

The protein belongs to the TRAFAC class translation factor GTPase superfamily. Classic translation factor GTPase family. LepA subfamily.

It is found in the cell inner membrane. The catalysed reaction is GTP + H2O = GDP + phosphate + H(+). Its function is as follows. Required for accurate and efficient protein synthesis under certain stress conditions. May act as a fidelity factor of the translation reaction, by catalyzing a one-codon backward translocation of tRNAs on improperly translocated ribosomes. Back-translocation proceeds from a post-translocation (POST) complex to a pre-translocation (PRE) complex, thus giving elongation factor G a second chance to translocate the tRNAs correctly. Binds to ribosomes in a GTP-dependent manner. This chain is Elongation factor 4, found in Trichlorobacter lovleyi (strain ATCC BAA-1151 / DSM 17278 / SZ) (Geobacter lovleyi).